The chain runs to 401 residues: Bifunctional D-cysteine desulfhydrase/1-aminocyclopropane-1-carboxylate deaminase, mitochondrial (401 aa).

The N-terminal 37 residues, 1–37 (MRGRSLTLSRVKLELARRSMSATSVPSMADFLTKKPY), are a transit peptide targeting the mitochondrion. R2 carries the N-acetylserine modification. K93 carries the post-translational modification N6-(pyridoxal phosphate)lysine. S120 acts as the Nucleophile in catalysis.

Belongs to the ACC deaminase/D-cysteine desulfhydrase family. It depends on pyridoxal 5'-phosphate as a cofactor. As to expression, highly expressed in stems and cauline leaves, and at lower levels in roots, rosette leaves and flowers.

It is found in the mitochondrion. The enzyme catalyses D-cysteine + H2O = hydrogen sulfide + pyruvate + NH4(+) + H(+). It carries out the reaction 1-aminocyclopropane-1-carboxylate + H2O = 2-oxobutanoate + NH4(+). In terms of biological role, catalyzes the production of hydrogen sulfide (H2S) from cysteine. Is mainly responsible for the degradation of cysteine to generate H2S, a regulator of stomatal movement and closure. Has high affinity for D-cysteine. Its function is as follows. Possesses 1-aminocyclopropane-1-carboxylic acid (ACC) deaminase activity. Acts as a regulator of ACC levels and causes changes in ethylene levels. This chain is Bifunctional D-cysteine desulfhydrase/1-aminocyclopropane-1-carboxylate deaminase, mitochondrial (DCD), found in Arabidopsis thaliana (Mouse-ear cress).